A 637-amino-acid chain; its full sequence is ATP-dependent rRNA helicase SPB4 (637 aa).

A Q motif motif is present at residues 14-42 (WDTLNPPLSEWIRDAVATMGFDQMTPVQA). The Helicase ATP-binding domain occupies 45 to 247 (LPHFMGNKDV…RVGLRNPVKI (203 aa)). Residue 58 to 65 (AVTGSGKT) participates in ATP binding. Residues 195 to 198 (DEAD) carry the DEAD box motif. Residues 283 to 438 (ALAELLRQLP…TITTSEDDAA (156 aa)) enclose the Helicase C-terminal domain. Residues 524-631 (KEKTREQQRK…AAAKQEKDGE (108 aa)) are a coiled coil. Composition is skewed to basic and acidic residues over residues 535–553 (ALEE…EEFK), 563–576 (SAKH…VERR), 583–618 (RDAE…EKAA), and 625–637 (KQEK…GFDD). Residues 535–637 (ALEEEKSGVK…KDGEFKGFDD (103 aa)) are disordered.

Belongs to the DEAD box helicase family. DDX55/SPB4 subfamily. As to quaternary structure, component of pre-60S ribosomal complexes.

The protein localises to the nucleus. The protein resides in the nucleolus. It carries out the reaction ATP + H2O = ADP + phosphate + H(+). Its function is as follows. ATP-binding RNA helicase involved in the biogenesis of 60S ribosomal subunits. Binds 90S pre-ribosomal particles and dissociates from pre-60S ribosomal particles after processing of 27SB pre-rRNA. Required for the normal formation of 18S rRNA through the processing of pre-rRNAs at sites A0, A1 and A2, and the normal formation of 25S and 5.8S rRNAs through the processing of pre-rRNAs at sites C1 and C2. The protein is ATP-dependent rRNA helicase SPB4 of Gibberella zeae (strain ATCC MYA-4620 / CBS 123657 / FGSC 9075 / NRRL 31084 / PH-1) (Wheat head blight fungus).